A 691-amino-acid polypeptide reads, in one-letter code: Calcium-binding and coiled-coil domain-containing protein 1 (691 aa).

The segment at 1 to 30 (MEESPLSRAPSRGGVNFLNVARTYIPNTKV) is p300 KIX-binding. The interval 1 to 190 (MEESPLSRAP…VQELERALAT (190 aa)) is N-terminal AD (CTNNB1 binding site). Residue S4 is modified to Phosphoserine. The tract at residues 45 to 125 (SDWIGIFKVE…FQFREPRPMD (81 aa)) is interaction with GATA1. Coiled-coil stretches lie at residues 145 to 205 (KATV…YKGI), 232 to 339 (ELED…AELE), and 417 to 514 (QSVE…ADEK). The tract at residues 501 to 691 (RKLEARLEKV…FSTQDPFTFE (191 aa)) is C-terminal AD (CTNNB1 binding site); interaction with CCAR1. Residues 513-604 (EKWNEDATTE…SDSEAEDEKS (92 aa)) are disordered. The UBZ1-type zinc finger occupies 653 to 679 (WKECPICKERFPAESDKDALEDHMDGH). Positions 656, 659, 675, and 679 each coordinate Zn(2+).

Belongs to the CALCOCO family. Part of a calphoglin complex consisting of CALCOCO1, PPA1 and PGM. Interacts with the bHLH-PAS domains of GRIP1, AHR and ARNT. Interacts with CTNNB1 via both its N- and C-terminal regions. Interacts with EP300. Interacts with CCAR1 (via N-terminus) and GATA1.

It localises to the cytoplasm. It is found in the nucleus. Functions as a coactivator for aryl hydrocarbon and nuclear receptors (NR). Recruited to promoters through its contact with the N-terminal basic helix-loop-helix-Per-Arnt-Sim (PAS) domain of transcription factors or coactivators, such as NCOA2. During ER-activation acts synergistically in combination with other NCOA2-binding proteins, such as EP300, CREBBP and CARM1. Involved in the transcriptional activation of target genes in the Wnt/CTNNB1 pathway. Functions as a secondary coactivator in LEF1-mediated transcriptional activation via its interaction with CTNNB1. Coactivator function for nuclear receptors and LEF1/CTNNB1 involves differential utilization of two different activation regions. In association with CCAR1 enhances GATA1- and MED1-mediated transcriptional activation from the gamma-globin promoter during erythroid differentiation of K562 erythroleukemia cells. Its function is as follows. Seems to enhance inorganic pyrophosphatase thus activating phosphogluomutase (PMG). Probably functions as a component of the calphoglin complex, which is involved in linking cellular metabolism (phosphate and glucose metabolism) with other core functions including protein synthesis and degradation, calcium signaling and cell growth. The protein is Calcium-binding and coiled-coil domain-containing protein 1 (CALCOCO1) of Pongo abelii (Sumatran orangutan).